The sequence spans 214 residues: RNA pyrophosphohydrolase (214 aa).

In terms of domain architecture, Nudix hydrolase spans 6-149; sequence GFRPNVGIIL…KRDVYQLALT (144 aa). The Nudix box motif lies at 38–59; the sequence is GGIKYGETPMQAMYRELHEETG.

Belongs to the Nudix hydrolase family. RppH subfamily. A divalent metal cation is required as a cofactor.

Accelerates the degradation of transcripts by removing pyrophosphate from the 5'-end of triphosphorylated RNA, leading to a more labile monophosphorylated state that can stimulate subsequent ribonuclease cleavage. The polypeptide is RNA pyrophosphohydrolase (Burkholderia cenocepacia (strain ATCC BAA-245 / DSM 16553 / LMG 16656 / NCTC 13227 / J2315 / CF5610) (Burkholderia cepacia (strain J2315))).